The chain runs to 287 residues: MPRSFLVKTHSSHRVPNYGKLETLREANGSCSACKELAGSRHLPDEEAPCNPSDPLQPWDSTSAVACISLPLLPNHRETLGVSGPEPQETSWVGPRAAQAPSVTLKDSFTLPPLLVLPTRWPPILGPDGALNEHLRAEGTSRVPGSFECIHCHRPYHTLAGLARHQQLHCHLPTGRAFTCRYCDKEYASLGALKMHIRTHTLPCICKVCGKAFSRPWLLQGHIRTHTGEKPYTCSHCSRAFADRSNLRAHLQTHVGTKKYRCAVCPKAFSRMSLLARHEEAGCCPGP.

The segment at methionine 1 to lysine 20 is SNAG domain. 4 consecutive C2H2-type zinc fingers follow at residues phenylalanine 147–histidine 169, phenylalanine 178–histidine 200, cysteine 204–histidine 226, and tyrosine 232–histidine 254. Residues tyrosine 260 to glycine 282 form a C2H2-type 5; degenerate zinc finger.

Belongs to the snail C2H2-type zinc-finger protein family. As to expression, highly expressed in skeletal muscle and thymus. Lower expression in heart, lung and spleen.

The protein resides in the nucleus. In terms of biological role, seems to inhibit myoblast differentiation. Transcriptional repressor of E-box-dependent transactivation of downstream myogenic bHLHs genes. Binds preferentially to the canonical E-box sequences 5'-CAGGTG-3' and 5'-CACCTG-3'. The chain is Zinc finger protein SNAI3 (Snai3) from Mus musculus (Mouse).